Reading from the N-terminus, the 1085-residue chain is Voltage-dependent calcium channel subunit alpha-2/delta-3 (1085 aa).

The signal sequence occupies residues 1–33 (MAGPGSLCCASRGASALLATALLYAALGDVVRS). The Extracellular segment spans residues 34-1062 (EQQIPLSVVK…HPEENARECG (1029 aa)). Asn166 carries N-linked (GlcNAc...) asparagine glycosylation. In terms of domain architecture, VWFA spans 256 to 438 (DVVILVDVSG…ENVMEYLHVL (183 aa)). Positions 262, 264, and 266 each coordinate a divalent metal cation. Positions 262–266 (DVSGS) match the MIDAS-like motif motif. The N-linked (GlcNAc...) asparagine glycan is linked to Asn309. A disulfide bond links Cys412 and Cys1049. A Cache domain is found at 452 to 543 (WTEAYIDSTL…RPLYEEGKKR (92 aa)). Asn547 and Asn626 each carry an N-linked (GlcNAc...) asparagine glycan. Residue Tyr918 is modified to Phosphotyrosine. The chain crosses the membrane as a helical span at residues 1063–1083 (GASSLQAQVALLLLPLVSSLF). The Cytoplasmic segment spans residues 1084–1085 (SR).

The protein belongs to the calcium channel subunit alpha-2/delta family. Dimer formed of alpha-2-2 and delta-2 chains; disulfide-linked. Voltage-dependent calcium channels are multisubunit complexes, consisting of alpha-1 (CACNA1), alpha-2 (CACNA2D), beta (CACNB) and delta (CACNA2D) subunits in a 1:1:1:1 ratio. In terms of processing, N-glycosylated. May be proteolytically processed into subunits alpha-2-3 and delta-3 that are disulfide-linked. It is however unclear whether such cleavage really takes place in vivo and has a functional role. As to expression, in heart, it is expressed in atrium but not in ventricle.

The protein resides in the membrane. The alpha-2/delta subunit of voltage-dependent calcium channels regulates calcium current density and activation/inactivation kinetics of the calcium channel. Acts as a regulatory subunit for P/Q-type calcium channel (CACNA1A), N-type (CACNA1B), L-type (CACNA1C OR CACNA1D) but not T-type (CACNA1G). The chain is Voltage-dependent calcium channel subunit alpha-2/delta-3 (Cacna2d3) from Rattus norvegicus (Rat).